The chain runs to 467 residues: UDP-N-acetylmuramate--L-alanine ligase (467 aa).

An ATP-binding site is contributed by 121–127 (GSHGKTT).

Belongs to the MurCDEF family.

It is found in the cytoplasm. The enzyme catalyses UDP-N-acetyl-alpha-D-muramate + L-alanine + ATP = UDP-N-acetyl-alpha-D-muramoyl-L-alanine + ADP + phosphate + H(+). Its pathway is cell wall biogenesis; peptidoglycan biosynthesis. Its function is as follows. Cell wall formation. The polypeptide is UDP-N-acetylmuramate--L-alanine ligase (Parasynechococcus marenigrum (strain WH8102)).